The following is a 240-amino-acid chain: EF-hand domain-containing protein D2 (240 aa).

A2 bears the N-acetylalanine mark. The residue at position 11 (S11) is a Phosphoserine. The interval 13 to 38 (RLQMEGEGGGETPEQPGLNGAAAAAA) is disordered. Phosphoserine is present on residues S74 and S76. Position 83 is a phosphotyrosine (Y83). EF-hand domains lie at 92–127 (KQIK…LGAP) and 128–163 (QTHL…AAAG). Ca(2+)-binding residues include D105, D109, E116, D141, D143, D145, K147, and E152. An N6-acetyllysine modification is found at K233.

In terms of assembly, interacts with CASP9; with inactive form. As to expression, found in lymphocytes; preferentially expressed in CD8+ cells.

It is found in the membrane raft. In terms of biological role, may regulate B-cell receptor (BCR)-induced immature and primary B-cell apoptosis. Plays a role as negative regulator of the canonical NF-kappa-B-activating branch. Controls spontaneous apoptosis through the regulation of BCL2L1 abundance. The sequence is that of EF-hand domain-containing protein D2 (EFHD2) from Homo sapiens (Human).